A 747-amino-acid polypeptide reads, in one-letter code: MNVSKILVSPTVTTNVLRIFAPRLPQIGASLLVQKKWALRSKKFYRFYSEKNSGEMPPKKEADSSGKASNKSTISSIDNSQPPPPSNTNDKTKQANVAVSHAMLATREQEANKDLTSPDAQAAFYKLLLQSNYPQYVVSRFETPGIASSPECMELYMEALQRIGRHSEADAVRQNLLTASSAGAVNPSLASSSSNQSGYHGNFPSMYSPLYGSRKEPLHVVVSESTFTVVSRWVKWLLVFGILTYSFSEGFKYITENTTLLKSSEVADKSVDVAKTNVKFDDVCGCDEARAELEEIVDFLKDPTKYESLGGKLPKGVLLTGPPGTGKTLLARATAGEAGVDFFFMSGSEFDEVYVGVGAKRIRDLFAQARSRAPAIIFIDELDAIGGKRNPKDQAYAKQTLNQLLVELDGFSQTSGIIIIGATNFPEALDKALTRPGRFDKVVNVDLPDVRGRADILKHHMKKITLADNVDPTIIARGTPGLSGAELANLVNQAAVYACQKNAVSVDMSHFEWAKDKILMGAERKTMVLTDAARKATAFHEAGHAIMAKYTNGATPLYKATILPRGRALGITFQLPEMDKVDITKRECQARLDVCMGGKIAEELIYGKDNTTSGCGSDLQSATGTARAMVTQYGMSDDVGPVNLSENWESWSNKIRDIADNEVIELLKDSEERARRLLTKKNVELHRLAQGLIEYETLDAHEIEQVCKGEKLDKLKTSTNTVVEGPDSDERKDIGDDKPKIPTMLNA.

The span at Lys51–Ser64 shows a compositional bias: basic and acidic residues. The disordered stretch occupies residues Lys51 to Thr92. A compositionally biased stretch (polar residues) spans Gly66–Ser80. ATP is bound at residue Gly321–Thr328. His540 is a Zn(2+) binding site. The active site involves Glu541. Residues His544 and Asp618 each contribute to the Zn(2+) site. Residues Ser718 to Ala747 form a disordered region. The span at Ser728–Lys740 shows a compositional bias: basic and acidic residues.

It in the N-terminal section; belongs to the AAA ATPase family. The protein in the C-terminal section; belongs to the peptidase M41 family. As to quaternary structure, component of the mitochondrial inner membrane i-AAA protease supercomplex composed of MGR1, MGR3 and YME1. Interacts directly with MGR1. Zn(2+) is required as a cofactor.

Its subcellular location is the mitochondrion inner membrane. Functionally, catalytic subunit of the mitochondrial inner membrane i-AAA protease supercomplex required for mitochondrial inner membrane protein turnover. The protease is probably ATP-dependent. Important to maintain the integrity of the mitochondrial compartment. Required both for the degradation of unassembled subunit 2 of cytochrome c oxidase (COX2) and for efficient assembly of mitochondrial respiratory chain. Binds unfolded substrates in an ATPase-independent manner; binding of folded COX2, a physiological substrate, requires an active ATPase but when COX2 is destabilized an active ATPase is no longer necessary. May process ATG32. This chain is Mitochondrial inner membrane i-AAA protease supercomplex subunit YME1 (YME1), found in Saccharomyces cerevisiae (strain ATCC 204508 / S288c) (Baker's yeast).